A 232-amino-acid polypeptide reads, in one-letter code: Cysteine proteinase inhibitor 7 (232 aa).

A signal peptide spans 1–29; it reads MDMRRASMCMMLICVSLVLLSGFGQFVIC. 2 consecutive Cystatin domains span residues 46 to 135 and 152 to 214; these read GGFS…KNII and FDWR…ERGN. Residues 91-95 carry the Secondary area of contact motif; the sequence is QVVAG. A Phosphoserine modification is found at S181.

Belongs to the cystatin family. Phytocystatin subfamily.

Its subcellular location is the secreted. Specific inhibitor of cysteine proteinases. Probably involved in the regulation of endogenous processes and in defense against pests and pathogens. This Arabidopsis thaliana (Mouse-ear cress) protein is Cysteine proteinase inhibitor 7 (CYS7).